We begin with the raw amino-acid sequence, 146 residues long: Large ribosomal subunit protein uL15 (146 aa).

Residues 1-10 (MTLKLHDLRP) are compositionally biased toward basic and acidic residues. The tract at residues 1–41 (MTLKLHDLRPARGSKIARTRVGRGDGSKGKTAGRGTKGTRA) is disordered.

This sequence belongs to the universal ribosomal protein uL15 family. In terms of assembly, part of the 50S ribosomal subunit.

Binds to the 23S rRNA. This is Large ribosomal subunit protein uL15 from Mycobacterium tuberculosis (strain ATCC 25177 / H37Ra).